The primary structure comprises 92 residues: Small ribosomal subunit protein uS19 (92 aa).

It belongs to the universal ribosomal protein uS19 family.

Its function is as follows. Protein S19 forms a complex with S13 that binds strongly to the 16S ribosomal RNA. In Rhizobium rhizogenes (strain K84 / ATCC BAA-868) (Agrobacterium radiobacter), this protein is Small ribosomal subunit protein uS19.